The following is a 181-amino-acid chain: Dual-action ribosomal maturation protein DarP (181 aa).

This sequence belongs to the DarP family.

The protein resides in the cytoplasm. Member of a network of 50S ribosomal subunit biogenesis factors which assembles along the 30S-50S interface, preventing incorrect 23S rRNA structures from forming. Promotes peptidyl transferase center (PTC) maturation. This Actinobacillus succinogenes (strain ATCC 55618 / DSM 22257 / CCUG 43843 / 130Z) protein is Dual-action ribosomal maturation protein DarP.